The chain runs to 40 residues: Sauvagin (40 aa).

Gln1 carries the pyrrolidone carboxylic acid modification. Ile40 carries the post-translational modification Isoleucine amide.

Belongs to the sauvagine/corticotropin-releasing factor/urotensin I family.

The protein localises to the secreted. Hypotensive and diuretic peptide. The sequence is that of Sauvagin from Phyllomedusa sauvagei (Sauvage's leaf frog).